The primary structure comprises 264 residues: MKSYLVLLKKILKEGSNRKDRTGIGTLSVFGYHMEFNLKLGFPLITTKKCHFPAIVHELLWFLKGDTNIKYLNDHNISIWNPWADERGYLGPIYGEQWRSWKTKDGRVIDQIDNVIHLIKNNPNSRRIVVSSWNVGDLHKMALLPCHVLFQFHVVDHVLHCQLYQRSCDVFLGLPFNIASYSLLTHMIAQQCNLKVGNFIWTGGDVHLYKNHIKQAKKQILRRPYLLPKLVINRKPTQIFNYLLQDFNLLNYKYHPSIHAKIAI.

Arg21 provides a ligand contact to dUMP. His51 contributes to the (6R)-5,10-methylene-5,6,7,8-tetrahydrofolate binding site. 126 to 127 (RR) is a binding site for dUMP. The Nucleophile role is filled by Cys146. DUMP-binding positions include 166-169 (RSCD), Asn177, and 207-209 (HLY). Asp169 contacts (6R)-5,10-methylene-5,6,7,8-tetrahydrofolate. Residue Ala263 participates in (6R)-5,10-methylene-5,6,7,8-tetrahydrofolate binding.

This sequence belongs to the thymidylate synthase family. Bacterial-type ThyA subfamily. In terms of assembly, homodimer.

It is found in the cytoplasm. It carries out the reaction dUMP + (6R)-5,10-methylene-5,6,7,8-tetrahydrofolate = 7,8-dihydrofolate + dTMP. It participates in pyrimidine metabolism; dTTP biosynthesis. Its function is as follows. Catalyzes the reductive methylation of 2'-deoxyuridine-5'-monophosphate (dUMP) to 2'-deoxythymidine-5'-monophosphate (dTMP) while utilizing 5,10-methylenetetrahydrofolate (mTHF) as the methyl donor and reductant in the reaction, yielding dihydrofolate (DHF) as a by-product. This enzymatic reaction provides an intracellular de novo source of dTMP, an essential precursor for DNA biosynthesis. This Buchnera aphidicola subsp. Baizongia pistaciae (strain Bp) protein is Thymidylate synthase.